The following is a 180-amino-acid chain: Stathmin-3 (180 aa).

The region spanning 38–180 is the SLD domain; that stretch reads GDMEVKQLDK…NKEQREEISG (143 aa). Low complexity predominate over residues 60–74; sequence SPSDLSPESPILSSP. The segment at 60–82 is disordered; that stretch reads SPSDLSPESPILSSPPKKKDLSL. A coiled-coil region spans residues 75 to 179; the sequence is PKKKDLSLEE…RNKEQREEIS (105 aa).

It belongs to the stathmin family.

This Gallus gallus (Chicken) protein is Stathmin-3 (STMN3).